A 196-amino-acid chain; its full sequence is Protein GrpE (196 aa).

Residues 1–24 (MAENERTTENFQPQDPSYAEAATT) form a disordered region.

It belongs to the GrpE family. As to quaternary structure, homodimer.

It localises to the cytoplasm. Functionally, participates actively in the response to hyperosmotic and heat shock by preventing the aggregation of stress-denatured proteins, in association with DnaK and GrpE. It is the nucleotide exchange factor for DnaK and may function as a thermosensor. Unfolded proteins bind initially to DnaJ; upon interaction with the DnaJ-bound protein, DnaK hydrolyzes its bound ATP, resulting in the formation of a stable complex. GrpE releases ADP from DnaK; ATP binding to DnaK triggers the release of the substrate protein, thus completing the reaction cycle. Several rounds of ATP-dependent interactions between DnaJ, DnaK and GrpE are required for fully efficient folding. In Gloeobacter violaceus (strain ATCC 29082 / PCC 7421), this protein is Protein GrpE.